The chain runs to 336 residues: Glyceraldehyde-3-phosphate dehydrogenase 1 (336 aa).

Residues 13-14 and aspartate 35 contribute to the NAD(+) site; that span reads RI. Serine 59 carries the phosphoserine modification. Position 80 (arginine 80) interacts with NAD(+). At serine 125 the chain carries Phosphoserine. D-glyceraldehyde 3-phosphate contacts are provided by residues 151–153, threonine 182, 211–212, and arginine 234; these read SCT and TG. Residue cysteine 152 is the Nucleophile of the active site. NAD(+) is bound at residue asparagine 316.

The protein belongs to the glyceraldehyde-3-phosphate dehydrogenase family. As to quaternary structure, homotetramer.

It localises to the cytoplasm. The enzyme catalyses D-glyceraldehyde 3-phosphate + phosphate + NAD(+) = (2R)-3-phospho-glyceroyl phosphate + NADH + H(+). It functions in the pathway carbohydrate degradation; glycolysis; pyruvate from D-glyceraldehyde 3-phosphate: step 1/5. The sequence is that of Glyceraldehyde-3-phosphate dehydrogenase 1 (tdh1) from Schizosaccharomyces pombe (strain 972 / ATCC 24843) (Fission yeast).